Reading from the N-terminus, the 356-residue chain is Arginine kinase Lit v 2.0101 (356 aa).

Residues K9–V91 form the Phosphagen kinase N-terminal domain. Position 64–68 (G64–Y68) interacts with L-arginine. Residues F119–M356 form the Phosphagen kinase C-terminal domain. ATP is bound by residues S122–R126 and H185. E225 lines the L-arginine pocket. R229 provides a ligand contact to ATP. C271 contacts L-arginine. Residues R280–H284 and R309–E314 each bind ATP. E314 is a binding site for L-arginine.

This sequence belongs to the ATP:guanido phosphotransferase family. Monomer. Muscle (at protein level).

The catalysed reaction is L-arginine + ATP = N(omega)-phospho-L-arginine + ADP + H(+). The enzyme catalyses dTDP + ATP = dTTP + ADP. Catalyzes the reversible transfer of high energy ATP gamma-phosphate group to L-arginine. Has nucleoside diphosphate kinase-like activity toward dTDP. Binds and phosphorylates dTDP using ATP as a phosphate donor. Does not phosphorylate dADP, dCDP, dGDP, dTMP or thymidine. The sequence is that of Arginine kinase Lit v 2.0101 from Penaeus vannamei (Whiteleg shrimp).